We begin with the raw amino-acid sequence, 726 residues long: Pre-mRNA-splicing factor CLF1 (726 aa).

HAT repeat units lie at residues 55–87 (EFQA…WEAS), 89–121 (NEYE…MELK), 123–155 (RNIN…LEEL), 157–188 (LNVS…LEER), 190–221 (NELD…FEED), 223–262 (GQPD…METR), 264–298 (KEFE…FEKQ), 308–340 (TVLG…LEED), 352–386 (VEPM…LWLQ), 396–432 (KDYD…FEIR), 434–465 (LDVS…LEMR), 467–499 (REFD…VESA), 501–534 (EDFE…FEAG), 536–567 (GERE…MEIA), 585–626 (GDAD…EHGD), and 635–667 (DMLP…DDER). Residues 682–726 (AWAQQRAGQGEEGGLSYDLPSDSEDENEDGDEDGDGREEEGMDQD) are disordered. The span at 702–726 (SDSEDENEDGDEDGDGREEEGMDQD) shows a compositional bias: acidic residues.

The protein belongs to the crooked-neck family. As to quaternary structure, associated with the spliceosome.

The protein localises to the nucleus. Its function is as follows. Involved in pre-mRNA splicing and cell cycle progression. Required for the spliceosome assembly and initiation of the DNA replication. This chain is Pre-mRNA-splicing factor CLF1 (CLF1), found in Cryptococcus neoformans var. neoformans serotype D (strain B-3501A) (Filobasidiella neoformans).